The primary structure comprises 128 residues: MRHRKSGRHLSRTSSHRKAMFQNMAVSLFEHELIKTTLPKAKELRRVAEPLITLAKEDSVANRRLAFDRTRSKEIVGKLFNDLGKRYATRQGGYLRILKCGFRAGDNAPMAYVELVDRPVGGSVEPAE.

Belongs to the bacterial ribosomal protein bL17 family. Part of the 50S ribosomal subunit. Contacts protein L32.

The polypeptide is Large ribosomal subunit protein bL17 (Pseudomonas savastanoi pv. phaseolicola (strain 1448A / Race 6) (Pseudomonas syringae pv. phaseolicola (strain 1448A / Race 6))).